The sequence spans 433 residues: tRNA-2-methylthio-N(6)-dimethylallyladenosine synthase (433 aa).

Residues 3 to 118 (KKLFIQTLGC…ITKAVNTPKF (116 aa)) form the MTTase N-terminal domain. [4Fe-4S] cluster-binding residues include C12, C49, C81, C150, C154, and C157. The Radical SAM core domain occupies 136-369 (RGSPYKSHIN…QNRHSEILDE (234 aa)). The region spanning 372 to 433 (AAQKDKIFDV…RMVLYGELQI (62 aa)) is the TRAM domain.

This sequence belongs to the methylthiotransferase family. MiaB subfamily. As to quaternary structure, monomer. [4Fe-4S] cluster is required as a cofactor.

Its subcellular location is the cytoplasm. The enzyme catalyses N(6)-dimethylallyladenosine(37) in tRNA + (sulfur carrier)-SH + AH2 + 2 S-adenosyl-L-methionine = 2-methylsulfanyl-N(6)-dimethylallyladenosine(37) in tRNA + (sulfur carrier)-H + 5'-deoxyadenosine + L-methionine + A + S-adenosyl-L-homocysteine + 2 H(+). In terms of biological role, catalyzes the methylthiolation of N6-(dimethylallyl)adenosine (i(6)A), leading to the formation of 2-methylthio-N6-(dimethylallyl)adenosine (ms(2)i(6)A) at position 37 in tRNAs that read codons beginning with uridine. The protein is tRNA-2-methylthio-N(6)-dimethylallyladenosine synthase of Campylobacter concisus (strain 13826).